Reading from the N-terminus, the 420-residue chain is WD repeat-containing protein 21 (420 aa).

The DDB-boX signature appears at 73–75; sequence RQF. 3 WD repeats span residues 251–289, 293–332, and 341–383; these read QSKG…ECVQ, HGSS…SKKR, and GHSN…PFKE.

Its subcellular location is the cytoplasm. It is found in the nucleus. The protein is WD repeat-containing protein 21 (wdr21) of Schizosaccharomyces pombe (strain 972 / ATCC 24843) (Fission yeast).